Here is a 67-residue protein sequence, read N- to C-terminus: Large ribosomal subunit protein uL29 (67 aa).

It belongs to the universal ribosomal protein uL29 family.

This chain is Large ribosomal subunit protein uL29, found in Wolbachia pipientis wMel.